Consider the following 191-residue polypeptide: Dephospho-CoA kinase (191 aa).

The DPCK domain occupies 3-191 (AIGITGSYAS…KLIKNLECQV (189 aa)). 11 to 16 (ASGKTF) contributes to the ATP binding site.

It belongs to the CoaE family.

Its subcellular location is the cytoplasm. The enzyme catalyses 3'-dephospho-CoA + ATP = ADP + CoA + H(+). It functions in the pathway cofactor biosynthesis; coenzyme A biosynthesis; CoA from (R)-pantothenate: step 5/5. Functionally, catalyzes the phosphorylation of the 3'-hydroxyl group of dephosphocoenzyme A to form coenzyme A. The sequence is that of Dephospho-CoA kinase from Rickettsia typhi (strain ATCC VR-144 / Wilmington).